The chain runs to 358 residues: Bi-functional coumaroyl CoA and feruloyl CoA ortho-hydroxylase F6H2-2-1 (358 aa).

The region spanning 200-308 (SKESLLMGSR…RISVPVFVNP (109 aa)) is the Fe2OG dioxygenase domain. Position 216 (Y216) interacts with 2-oxoglutarate. Fe cation contacts are provided by H231, D233, and H289. 2 residues coordinate 2-oxoglutarate: R299 and S301.

The protein belongs to the iron/ascorbate-dependent oxidoreductase family. It depends on L-ascorbate as a cofactor. Fe(2+) is required as a cofactor. Mostly expressed in underground stems and stems.

The enzyme catalyses (E)-4-coumaroyl-CoA + 2-oxoglutarate + O2 = (E)-2,4-dihydroxycinnamoyl-CoA + succinate + CO2. It catalyses the reaction (E)-feruloyl-CoA + 2-oxoglutarate + O2 = (E)-6-hydroxyferuloyl-CoA + succinate + CO2. It functions in the pathway phenylpropanoid metabolism. Functionally, 2-oxoglutarate (OG)- and Fe(II)-dependent dioxygenase (2OGD) involved in scopoletin and umbelliferone biosynthesis. Converts feruloyl CoA into 6'-hydroxyferuloyl CoA, and p-coumaroyl CoA into 2,4-dihydroxycinnamoyl-CoA, but has no activity toward caffeoyl-CoA. The chain is Bi-functional coumaroyl CoA and feruloyl CoA ortho-hydroxylase F6H2-2-1 from Ipomoea batatas (Sweet potato).